The chain runs to 255 residues: Imidazole glycerol phosphate synthase subunit HisF (255 aa).

Active-site residues include D12 and D131.

This sequence belongs to the HisA/HisF family. Heterodimer of HisH and HisF.

It is found in the cytoplasm. The enzyme catalyses 5-[(5-phospho-1-deoxy-D-ribulos-1-ylimino)methylamino]-1-(5-phospho-beta-D-ribosyl)imidazole-4-carboxamide + L-glutamine = D-erythro-1-(imidazol-4-yl)glycerol 3-phosphate + 5-amino-1-(5-phospho-beta-D-ribosyl)imidazole-4-carboxamide + L-glutamate + H(+). It functions in the pathway amino-acid biosynthesis; L-histidine biosynthesis; L-histidine from 5-phospho-alpha-D-ribose 1-diphosphate: step 5/9. Functionally, IGPS catalyzes the conversion of PRFAR and glutamine to IGP, AICAR and glutamate. The HisF subunit catalyzes the cyclization activity that produces IGP and AICAR from PRFAR using the ammonia provided by the HisH subunit. The sequence is that of Imidazole glycerol phosphate synthase subunit HisF from Salinispora tropica (strain ATCC BAA-916 / DSM 44818 / JCM 13857 / NBRC 105044 / CNB-440).